A 352-amino-acid chain; its full sequence is C-X-C chemokine receptor type 4 (352 aa).

The interval 1-21 is important for chemokine binding and signaling; it reads MEGISIYTSDNYTEEMGSGDY. Residues 1 to 38 lie on the Extracellular side of the membrane; the sequence is MEGISIYTSDNYTEEMGSGDYDSMKEPCFREENANFNK. Y7 carries the post-translational modification Sulfotyrosine. Residue N11 is glycosylated (N-linked (GlcNAc...) asparagine). Position 12 is a sulfotyrosine (Y12). S18 carries an O-linked (Xyl...) (chondroitin sulfate) serine glycan. Y21 carries the sulfotyrosine modification. Disulfide bonds link C28–C274 and C109–C186. A helical membrane pass occupies residues 39–63; that stretch reads IFLPTIYSIIFLTGIVGNGLVILVM. Residues 64 to 77 lie on the Cytoplasmic side of the membrane; the sequence is GYQKKLRSMTDKYR. Residues 78–99 form a helical membrane-spanning segment; that stretch reads LHLSVADLLFVITLPFWAVDAV. The tract at residues 94 to 97 is chemokine binding; the sequence is WAVD. Topologically, residues 100–110 are extracellular; that stretch reads ANWYFGNFLCK. A helical membrane pass occupies residues 111–130; that stretch reads AVHVIYTVNLYSSVLILAFI. Residues 113-117 form a chemokine binding region; the sequence is HVIYT. Residues 131–154 lie on the Cytoplasmic side of the membrane; the sequence is SLDRYLAIVHATNSQRPRKLLAEK. Positions 133–135 match the Important for signaling motif; sequence DRY. The involved in dimerization; when bound to chemokine stretch occupies residues 135 to 147; it reads YLAIVHATNSQRP. The chain crosses the membrane as a helical span at residues 155–174; it reads VVYVGVWIPALLLTIPDFIF. At 175-195 the chain is on the extracellular side; it reads ANVSEADDRYICDRFYPNDLW. Residues 186–190 form a chemokine binding, important for signaling region; the sequence is CDRFY. The segment at 191–210 is involved in dimerization; it reads PNDLWVVVFQFQHIMVGLIL. Residues 196 to 216 traverse the membrane as a helical segment; sequence VVVFQFQHIMVGLILPGIVIL. Residues 217 to 241 are Cytoplasmic-facing; the sequence is SCYCIIISKLSHSKGHQKRKALKTT. The helical transmembrane segment at 242-261 threads the bilayer; that stretch reads VILILAFFACWLPYYIGISI. The Extracellular portion of the chain corresponds to 262-282; sequence DSFILLEIIKQGCEFENTVHK. The tract at residues 266-268 is involved in dimerization; sequence LLE. The helical transmembrane segment at 283–302 threads the bilayer; it reads WISITEALAFFHCCLNPILY. The Cytoplasmic portion of the chain corresponds to 303–352; sequence AFLGAKFKTSAQHALTSVSRGSSLKILSKGKRGGHSSVSTESESSSFHSS. 2 positions are modified to phosphoserine: S319 and S321. Phosphoserine; by PKC and GRK6 occurs at positions 324 and 325. Residues 329 to 352 are disordered; it reads LSKGKRGGHSSVSTESESSSFHSS. Position 330 is a phosphoserine; by GRK6 (S330). Residue K331 forms a Glycyl lysine isopeptide (Lys-Gly) (interchain with G-Cter in ubiquitin) linkage. Positions 337 to 352 are enriched in low complexity; sequence HSSVSTESESSSFHSS. A Phosphoserine; by GRK6 modification is found at S339. 2 positions are modified to phosphoserine: S348 and S351.

The protein belongs to the G-protein coupled receptor 1 family. Monomer. Can form homodimers. Interacts with CD164. Interacts with ARRB2; the interaction is dependent on the C-terminal phosphorylation of CXCR4 and allows activation of MAPK1 and MAPK3. Interacts with ARR3; the interaction is dependent on the C-terminal phosphorylation of CXCR4 and modulates calcium mobilization. Interacts with RNF113A; the interaction, enhanced by CXCL12, promotes CXCR4 ubiquitination and subsequent degradation. Interacts (via the cytoplasmic C-terminal) with ITCH (via the WW domains I and II); the interaction, enhanced by CXCL12, promotes CXCR4 ubiquitination and leads to its degradation. Interacts with extracellular ubiquitin. Interacts with DBN1; this interaction is enhanced by antigenic stimulation. Following LPS binding, may form a complex with GDF5, HSP90AA1 and HSPA8. In terms of processing, phosphorylated on agonist stimulation. Rapidly phosphorylated on serine and threonine residues in the C-terminal. Phosphorylation at Ser-324 and Ser-325 leads to recruitment of ITCH, ubiquitination and protein degradation. Post-translationally, ubiquitinated after ligand binding, leading to its degradation. Ubiquitinated by ITCH at the cell membrane on agonist stimulation. The ubiquitin-dependent mechanism, endosomal sorting complex required for transport (ESCRT), then targets CXCR4 for lysosomal degradation. This process is dependent also on prior Ser-/Thr-phosphorylation in the C-terminal of CXCR4. Also binding of ARRB1 to STAM negatively regulates CXCR4 sorting to lysosomes though modulating ubiquitination of SFR5S. Sulfation is required for efficient binding of CXCL12/SDF-1alpha and promotes its dimerization. In terms of processing, O- and N-glycosylated. N-glycosylation can mask coreceptor function. The O-glycosylation chondroitin sulfate attachment does not affect interaction with CXCL12/SDF-1alpha nor its coreceptor activity.

Its subcellular location is the cell membrane. It localises to the cell junction. It is found in the early endosome. The protein resides in the late endosome. The protein localises to the lysosome. Its function is as follows. Receptor for the C-X-C chemokine CXCL12/SDF-1 that transduces a signal by increasing intracellular calcium ion levels and enhancing MAPK1/MAPK3 activation. Involved in the AKT signaling cascade. Plays a role in regulation of cell migration, e.g. during wound healing. Acts as a receptor for extracellular ubiquitin; leading to enhanced intracellular calcium ions and reduced cellular cAMP levels. Binds bacterial lipopolysaccharide (LPS) et mediates LPS-induced inflammatory response, including TNF secretion by monocytes. Involved in hematopoiesis and in cardiac ventricular septum formation. Also plays an essential role in vascularization of the gastrointestinal tract, probably by regulating vascular branching and/or remodeling processes in endothelial cells. Involved in cerebellar development. In the CNS, could mediate hippocampal-neuron survival. This Pan troglodytes (Chimpanzee) protein is C-X-C chemokine receptor type 4 (CXCR4).